We begin with the raw amino-acid sequence, 652 residues long: Complement component C1q receptor (652 aa).

The N-terminal stretch at 1-21 (MATSMGLLLLLLLLLTQPGAG) is a signal peptide. Topologically, residues 24–580 (ADTEAVVCVG…QNNDGTDGQK (557 aa)) are extracellular. Residues 32–174 (VGTACYTAHS…CGSPGSPGSN (143 aa)) form the C-type lectin domain. 16 cysteine pairs are disulfide-bonded: C141–C165, C264–C275, C271–C285, C287–C300, C306–C317, C311–C328, C330–C343, C349–C358, C354–C367, C369–C383, C389–C400, C396–C409, C411–C425, C431–C443, C439–C452, and C454–C467. EGF-like domains follow at residues 260–301 (PKYG…VTCA) and 302–344 (SRNP…LDCV). An N-linked (GlcNAc...) asparagine glycan is attached at N325. The region spanning 345–384 (DVDECQDSPCAQECVNTPGGFRCECWVGYEPGGPGEGACQ) is the EGF-like 3; calcium-binding domain. The 42-residue stretch at 385–426 (DVDECALGRSPCAQGCTNTDGSFHCSCEEGYVLAGEDGTQCQ) folds into the EGF-like 4; calcium-binding domain. The EGF-like 5; calcium-binding domain maps to 427–468 (DVDECVGPGGPLCDSLCFNTQGSFHCGCLPGWVLAPNGVSCT). Disordered stretches follow at residues 472 to 546 (VSLG…VWRE) and 553 to 572 (TAAS…ATQN). Over residues 512–526 (ATPTTSRPSLSSDAP) the composition is skewed to polar residues. A helical transmembrane segment spans residues 581–601 (LLLFYILGTVVAILLLLALAL). The Cytoplasmic portion of the chain corresponds to 602–652 (GLLVYRKRRAKREEKKEKKPQNAADSYSWVPERAESRAMENQYSPTPGTDC). A disordered region spans residues 611–652 (AKREEKKEKKPQNAADSYSWVPERAESRAMENQYSPTPGTDC). Residues 612 to 621 (KREEKKEKKP) are compositionally biased toward basic and acidic residues. Phosphoserine is present on S627. Y628 and Y644 each carry phosphotyrosine. Positions 640 to 652 (MENQYSPTPGTDC) are enriched in polar residues.

In terms of assembly, homodimer. Interacts with C1QBP; the association may represent a cell surface C1q receptor. Interacts with surfactant protein A/SFTPA1. Interacts with multimerin-2/MMRN2. Interacts with DAG1; this interaction plays an important role in endothelial cell migration. Interacts with CBL. Interacts with IGFBP7. Interacts with VEGFR2. As to quaternary structure, (Microbial infection) Interacts with hepatitis virus C/HCV core protein. N- and O-glycosylated. Post-translationally, phosphorylated on Tyr-628 and Tyr-644 by SRC; these phosphorylations promote endothelial cell adhesion and migration. Highly expressed in endothelial cells, platelets, cells of myeloid origin, such as monocytes and neutrophils. Not expressed in cells of lymphoid origin.

Its subcellular location is the cell membrane. Cell surface receptor that plays a role in various physiological processes including inflammation, phagocytosis, and cell adhesion. Plays a role in phagocytosis and enhances the uptake of apoptotic cells and immune complexes by acting as a receptor for defense collagens including surfactant protein A/SFTPA1, C1q, and mannose-binding lectin (MBL2). Plays a role in the regulation of endothelial cell function and adhesion by activating angiogenesis. Mechanistically, exerts its angiogenic function by associating with beta-dystroglycan, leading to SRC-dependent phosphorylation and subsequent recruitment of CBL. In turn, CBL provides a docking site for downstream signaling components, such as CRKL to enhance cell migration. Participates in angiogenesis also by acting as a receptor for the ECM pan-endothelial glycoprotein multimerin-2/MMRN2 and IGFBP7 ligands. Both ligands play a non-redundant role in CD93-mediated endothelial cell function. Acts as a key regulator of endothelial barrier function through modulating VEGFR2 function. The polypeptide is Complement component C1q receptor (CD93) (Homo sapiens (Human)).